Reading from the N-terminus, the 222-residue chain is PKHD-type hydroxylase Syncc9902_2001 (222 aa).

One can recognise a Fe2OG dioxygenase domain in the interval 80 to 174 (RVHSILISRS…RLVCVGWIES (95 aa)). Residues His98, Asp100, and His155 each coordinate Fe cation. Residue Arg165 coordinates 2-oxoglutarate.

The cofactor is Fe(2+). Requires L-ascorbate as cofactor.

The chain is PKHD-type hydroxylase Syncc9902_2001 from Synechococcus sp. (strain CC9902).